The following is a 224-amino-acid chain: Toxin coregulated pilin (224 aa).

A propeptide spans 1–25 (MQLLKQLFKKKFVKEEHDKKTGQEG) (atypical leader sequence). Methionine 26 is modified (N-methylmethionine). Residues 26 to 46 (MTLLEVIIVLGIMGVVSAGVV) traverse the membrane as a helical segment. A disulfide bridge connects residues cysteine 145 and cysteine 211.

The protein localises to the fimbrium. It is found in the membrane. Its function is as follows. Major component of the toxin co-regulated pilus (tcp) which is a type IV pilus essential for bacterial aggregation and subsequent colonization in the host small intestine. The sequence is that of Toxin coregulated pilin (tcpA) from Vibrio cholerae serotype O1 (strain ATCC 39315 / El Tor Inaba N16961).